The sequence spans 253 residues: 4-hydroxy-tetrahydrodipicolinate reductase (253 aa).

NAD(+) is bound by residues 8-13 (GAKGRM), D34, 76-78 (GTT), and 108-111 (APNF). H138 (proton donor/acceptor) is an active-site residue. H139 serves as a coordination point for (S)-2,3,4,5-tetrahydrodipicolinate. K142 (proton donor) is an active-site residue. 148 to 149 (GT) provides a ligand contact to (S)-2,3,4,5-tetrahydrodipicolinate.

The protein belongs to the DapB family.

The protein localises to the cytoplasm. It carries out the reaction (S)-2,3,4,5-tetrahydrodipicolinate + NAD(+) + H2O = (2S,4S)-4-hydroxy-2,3,4,5-tetrahydrodipicolinate + NADH + H(+). The enzyme catalyses (S)-2,3,4,5-tetrahydrodipicolinate + NADP(+) + H2O = (2S,4S)-4-hydroxy-2,3,4,5-tetrahydrodipicolinate + NADPH + H(+). Its pathway is amino-acid biosynthesis; L-lysine biosynthesis via DAP pathway; (S)-tetrahydrodipicolinate from L-aspartate: step 4/4. In terms of biological role, catalyzes the conversion of 4-hydroxy-tetrahydrodipicolinate (HTPA) to tetrahydrodipicolinate. The polypeptide is 4-hydroxy-tetrahydrodipicolinate reductase (Bifidobacterium animalis subsp. lactis (strain AD011)).